Consider the following 581-residue polypeptide: 2-isopropylmalate synthase (581 aa).

The 275-residue stretch at 32–306 folds into the Pyruvate carboxyltransferase domain; sequence PQWCAVDLRD…DPQLDFSDIK (275 aa). Mg(2+) contacts are provided by Asp-41, His-245, His-247, and Asn-281. The interval 455 to 581 is regulatory domain; the sequence is RSAPVEQIAL…KHQQLQNGGV (127 aa).

The protein belongs to the alpha-IPM synthase/homocitrate synthase family. LeuA type 2 subfamily. In terms of assembly, homodimer. Requires Mg(2+) as cofactor.

It is found in the cytoplasm. It carries out the reaction 3-methyl-2-oxobutanoate + acetyl-CoA + H2O = (2S)-2-isopropylmalate + CoA + H(+). It participates in amino-acid biosynthesis; L-leucine biosynthesis; L-leucine from 3-methyl-2-oxobutanoate: step 1/4. Its function is as follows. Catalyzes the condensation of the acetyl group of acetyl-CoA with 3-methyl-2-oxobutanoate (2-ketoisovalerate) to form 3-carboxy-3-hydroxy-4-methylpentanoate (2-isopropylmalate). This Corynebacterium efficiens (strain DSM 44549 / YS-314 / AJ 12310 / JCM 11189 / NBRC 100395) protein is 2-isopropylmalate synthase.